The sequence spans 378 residues: Succinyl-diaminopimelate desuccinylase (378 aa).

A Zn(2+)-binding site is contributed by His-66. Residue Asp-68 is part of the active site. Residue Asp-99 participates in Zn(2+) binding. Glu-133 serves as the catalytic Proton acceptor. The Zn(2+) site is built by Glu-134, Glu-162, and His-348.

This sequence belongs to the peptidase M20A family. DapE subfamily. Homodimer. Requires Zn(2+) as cofactor. The cofactor is Co(2+).

The enzyme catalyses N-succinyl-(2S,6S)-2,6-diaminopimelate + H2O = (2S,6S)-2,6-diaminopimelate + succinate. It functions in the pathway amino-acid biosynthesis; L-lysine biosynthesis via DAP pathway; LL-2,6-diaminopimelate from (S)-tetrahydrodipicolinate (succinylase route): step 3/3. Functionally, catalyzes the hydrolysis of N-succinyl-L,L-diaminopimelic acid (SDAP), forming succinate and LL-2,6-diaminopimelate (DAP), an intermediate involved in the bacterial biosynthesis of lysine and meso-diaminopimelic acid, an essential component of bacterial cell walls. In Halorhodospira halophila (strain DSM 244 / SL1) (Ectothiorhodospira halophila (strain DSM 244 / SL1)), this protein is Succinyl-diaminopimelate desuccinylase.